The sequence spans 177 residues: uncharacterized protein (177 aa).

It is found in the plastid. It localises to the chloroplast. This is an uncharacterized protein from Chlorella vulgaris (Green alga).